The sequence spans 531 residues: Light-independent protochlorophyllide reductase subunit B (531 aa).

D36 is a binding site for [4Fe-4S] cluster. Catalysis depends on D291, which acts as the Proton donor. Position 426-427 (426-427) interacts with substrate; the sequence is GL.

The protein belongs to the ChlB/BchB/BchZ family. Protochlorophyllide reductase is composed of three subunits; ChlL, ChlN and ChlB. Forms a heterotetramer of two ChlB and two ChlN subunits. It depends on [4Fe-4S] cluster as a cofactor.

The enzyme catalyses chlorophyllide a + oxidized 2[4Fe-4S]-[ferredoxin] + 2 ADP + 2 phosphate = protochlorophyllide a + reduced 2[4Fe-4S]-[ferredoxin] + 2 ATP + 2 H2O. The protein operates within porphyrin-containing compound metabolism; chlorophyll biosynthesis (light-independent). Functionally, component of the dark-operative protochlorophyllide reductase (DPOR) that uses Mg-ATP and reduced ferredoxin to reduce ring D of protochlorophyllide (Pchlide) to form chlorophyllide a (Chlide). This reaction is light-independent. The NB-protein (ChlN-ChlB) is the catalytic component of the complex. This chain is Light-independent protochlorophyllide reductase subunit B, found in Prochlorococcus marinus (strain MIT 9211).